The following is a 181-amino-acid chain: Protein GrpE (181 aa).

It belongs to the GrpE family. In terms of assembly, homodimer.

It is found in the cytoplasm. Its function is as follows. Participates actively in the response to hyperosmotic and heat shock by preventing the aggregation of stress-denatured proteins, in association with DnaK and GrpE. It is the nucleotide exchange factor for DnaK and may function as a thermosensor. Unfolded proteins bind initially to DnaJ; upon interaction with the DnaJ-bound protein, DnaK hydrolyzes its bound ATP, resulting in the formation of a stable complex. GrpE releases ADP from DnaK; ATP binding to DnaK triggers the release of the substrate protein, thus completing the reaction cycle. Several rounds of ATP-dependent interactions between DnaJ, DnaK and GrpE are required for fully efficient folding. The sequence is that of Protein GrpE from Leptothrix cholodnii (strain ATCC 51168 / LMG 8142 / SP-6) (Leptothrix discophora (strain SP-6)).